A 158-amino-acid polypeptide reads, in one-letter code: Small ribosomal subunit protein uS7 (158 aa).

Belongs to the universal ribosomal protein uS7 family. In terms of assembly, part of the 30S ribosomal subunit. Contacts proteins S9 and S11.

In terms of biological role, one of the primary rRNA binding proteins, it binds directly to 16S rRNA where it nucleates assembly of the head domain of the 30S subunit. Is located at the subunit interface close to the decoding center, probably blocks exit of the E-site tRNA. The chain is Small ribosomal subunit protein uS7 from Porphyromonas gingivalis (strain ATCC BAA-308 / W83).